Reading from the N-terminus, the 138-residue chain is uncharacterized protein (138 aa).

The disordered stretch occupies residues aspartate 89–glutamate 138.

This is an uncharacterized protein from Treponema pallidum (strain Nichols).